The chain runs to 87 residues: UPF0335 protein Meso_3367 (87 aa).

The protein belongs to the UPF0335 family.

This Chelativorans sp. (strain BNC1) protein is UPF0335 protein Meso_3367.